We begin with the raw amino-acid sequence, 311 residues long: Probable flavin reductase (311 aa).

Residues 38–41 (TANS), 55–61 (CLAKSSR), 88–89 (FA), and Arg95 each bind FMN.

This sequence belongs to the non-flavoprotein flavin reductase family.

The protein is Probable flavin reductase of Rhizobium meliloti (strain 1021) (Ensifer meliloti).